The chain runs to 140 residues: MKMLKSLSLIPRIVSPFQKCYSTDLISLVGVPRVKISKGQNRYLLVNIHTHGFTKYGRVIVRGADVDNHLAIFDSILEELEPEGICAKILGGGRILNEPDNKKIKIYGTSRTFGGADHTRTRNILQAWTTYKDFKITVKQ.

Arginine 42 serves as a coordination point for substrate. The active-site Proton acceptor is histidine 69. 110–112 (SRT) is a binding site for substrate.

It belongs to the janus family.

In terms of biological role, janA and janB regulate somatic sex differentiation. The protein is Sex-regulated protein janus-B (janB) of Drosophila sechellia (Fruit fly).